Here is a 1295-residue protein sequence, read N- to C-terminus: Protein glp-1 (1295 aa).

The signal sequence occupies residues 1-15 (MRVLLILLAFFAPIA). The Extracellular portion of the chain corresponds to 16–764 (SQLMGGECGR…NEIDEGWSRS (749 aa)). EGF-like domains are found at residues 19–58 (MGGECGREGACSVNGKCYNGKLIETYWCRCKKGFGGAFCE), 117–152 (GVNPCDSDPCNNGLCYPFYGGFQCICNNGYGGSYCE), 154–190 (GIDHCAQNECAEGSTCVNSVYNYYCDCPIGKSGRYCE), and 190–230 (ERTE…EFCN). Cystine bridges form between cysteine 23/cysteine 35, cysteine 29/cysteine 46, cysteine 48/cysteine 57, cysteine 121/cysteine 131, cysteine 126/cysteine 140, cysteine 142/cysteine 151, cysteine 158/cysteine 169, cysteine 163/cysteine 178, cysteine 180/cysteine 189, cysteine 201/cysteine 206, cysteine 220/cysteine 229, cysteine 236/cysteine 248, cysteine 242/cysteine 257, cysteine 259/cysteine 268, cysteine 275/cysteine 286, cysteine 280/cysteine 296, cysteine 298/cysteine 307, cysteine 329/cysteine 342, cysteine 336/cysteine 347, cysteine 349/cysteine 358, cysteine 373/cysteine 384, cysteine 378/cysteine 394, cysteine 396/cysteine 405, cysteine 411/cysteine 422, cysteine 416/cysteine 431, cysteine 433/cysteine 442, cysteine 450/cysteine 461, cysteine 455/cysteine 467, cysteine 469/cysteine 478, cysteine 496/cysteine 519, cysteine 501/cysteine 514, cysteine 510/cysteine 526, cysteine 536/cysteine 560, cysteine 542/cysteine 555, cysteine 551/cysteine 567, cysteine 582/cysteine 595, and cysteine 591/cysteine 607. The EGF-like 5; calcium-binding domain maps to 232–269 (DKNECLIEETCVNNSTCFNLHGDFTCTCKPGYAGKYCE). 2 N-linked (GlcNAc...) asparagine glycosylation sites follow: asparagine 244 and asparagine 245. 5 consecutive EGF-like domains span residues 271–308 (AIDMCKDYVCQNDGYCAHDSNQMPICYCEQGFTGQRCE), 316–359 (GGIH…DRCE), 369–406 (DIQSCKYNPCVNNATCIDLKNSGYSCHCPLGFYGLNCE), 407–443 (QHLLCTPTTCANGGTCEGVNGVIRCNCPNGFSGDYCE), and 446–479 (DRQLCSRHPCKNGGVCKNTGYCECQYGYTGPTCE). An N-linked (GlcNAc...) asparagine glycan is attached at asparagine 333. Asparagine 381 is a glycosylation site (N-linked (GlcNAc...) asparagine). LNR repeat units follow at residues 496 to 532 (CEQRKCMDLASNGICNPECNLEECNFDGGDCSGGQRP), 536 to 577 (CQYP…CPAH), and 581 to 612 (HCIERRGDGVCNLECSFIGCGFDGGDCNNGTE). N-linked (GlcNAc...) asparagine glycans are attached at residues asparagine 609 and asparagine 675. Residues 765–786 (QVILFACIAFLAFGTVVAGVIA) form a helical membrane-spanning segment. At 787–1295 (KNGPERSRKR…AEQMNGSFYC (509 aa)) the chain is on the cytoplasmic side. ANK repeat units follow at residues 961–990 (DENTALMLAVRAHRVRLSVVLLREGANPTI), 994–1023 (SERSALHEAVVNKDLRILRHLLTDKRLLKE), 1030–1062 (NGMTALMLVARELGKHQVEMAELLLSKGAKLDY), 1074–1103 (KGRTALHYAAMHDNEEMVIMLVRRSSNKDK), and 1107–1136 (DGRTPIMLAAKEGCEKTVQYLALNDASLGI). The segment at 1177–1244 (IVKSGHGAKS…TTSTPNRMET (68 aa)) is disordered. Polar residues predominate over residues 1201 to 1210 (KTPTSAASSR). The segment covering 1221-1239 (DGSFSSPSPHYYPTTTSTP) has biased composition (low complexity).

In terms of assembly, interacts with sel-10. When activated, the glp-1/Notch intracellular domain (NICD) may become a component of a complex consisting of at least the NICD, lag-1 and lag-3. Post-translationally, upon binding its ligands, it is cleaved (S2 cleavage) in its extracellular domain, close to the transmembrane domain. S2 cleavage is probably mediated by the metalloproteases adm-4 and sup-17. It is then cleaved (S3 cleavage) downstream of its transmembrane domain, releasing it from the cell membrane; S3 cleavage requires a multiprotein gamma-secretase complex, which may include presenilin sel-12. In terms of tissue distribution, expressed in the distal mitotic region of the germ line. May be absent from the gonadal distal tip cell (DTC).

Its subcellular location is the cell membrane. It is found in the cell projection. It localises to the axon. The protein resides in the nucleus. Functionally, essential signaling protein which has a major role in germline and embryonic development; involved in cell fate decisions that require cell-cell interactions. Probable membrane-bound receptor for putative ligands lag-2 and apx-1. Upon ligand activation, and releasing from the cell membrane, the glp-1/Notch intracellular domain (NICD) probably forms a transcriptional activator complex with lag-1 and lag-3 and regulates expression of various genes; targets in the germline include lst-1 and sygl-1. Involved in the specification of the cell fates of the blastomeres, ABa and ABp. Proper signaling by glp-1 induces ABa descendants to produce anterior pharyngeal cells, and ABp descendants to adopt a different fate. Contributes to the establishment of the dorsal-ventral axis in early embryos. Required in postmitotic neurons in order to maintain the developmentally arrested larval state known as dauer, probably in response to lag-2. Regulates germ cell mitotic proliferation probably by regulating MAP kinase phosphatase lip-1 expression. Required for oocyte growth control. Plays a negative role in lifespan. The sequence is that of Protein glp-1 from Caenorhabditis elegans.